A 621-amino-acid polypeptide reads, in one-letter code: Lamin-C (621 aa).

The disordered stretch occupies residues 1–47; it reads MSARRVTLNTRVSRASTSTPVGGASTSSRVGATSPTSPTRTSRQQEK. Residues 1 to 47 are head; sequence MSARRVTLNTRVSRASTSTPVGGASTSSRVGATSPTSPTRTSRQQEK. The segment covering 7 to 31 has biased composition (polar residues); that stretch reads TLNTRVSRASTSTPVGGASTSSRVG. Residues 33–42 are compositionally biased toward low complexity; it reads TSPTSPTRTS. A Phosphoserine modification is found at Ser34. Positions 46 to 402 constitute an IF rod domain; that stretch reads EKEELQHLND…KLLCGEERRL (357 aa). The segment at 47–85 is coil 1A; it reads KEELQHLNDRLACYIDRMRNLENENSRLTQELNLAQDTV. The linker 1 stretch occupies residues 86–95; sequence NRETSNLKAV. Residues 96–233 form a coil 1B region; that stretch reads YEKELAAARK…QVHTQELTET (138 aa). A linker 2 region spans residues 234-257; it reads RSRRQIEISEIDGRLSRQYEAKLQ. Positions 258–403 are coil 2; it reads QSLQELRDQY…LLCGEERRLN (146 aa). The disordered stretch occupies residues 404-458; sequence IESPGRPTTDSGISSNGSHLTASASSRSGRVTPSGRRSATPGISGSSAVKRRRTV. The tail stretch occupies residues 404–621; sequence IESPGRPTTD…GVRSLFSLLF (218 aa). Phosphoserine occurs at positions 406 and 441. Residues 409–450 show a composition bias toward polar residues; it reads RPTTDSGISSNGSHLTASASSRSGRVTPSGRRSATPGISGSS. The residue at position 443 (Thr443) is a Phosphothreonine. A Nuclear localization signal motif is present at residues 453 to 458; sequence KRRRTV. Positions 468-582 constitute an LTD domain; sequence SEYSVNAAAK…EDVASYDRVR (115 aa). Residues 585–605 form a disordered region; it reads VSSHTSRHRSSGTPSTGFTLG.

It belongs to the intermediate filament family. In terms of assembly, interacts with MAN1. As to expression, first detected from late stage 12 in the oenocytes, abdominal segments, hindgut and posterior spiracles, with expression increasing in stage 13 (at protein level). In stage 14, also becomes detectable in the foregut (at protein level). Stage 15 shows expression in the epidermis, dorsal longitudinal trunk, pharynx, esophagus and proventriculus, with the dorsal pharyngeal musculature showing expression in late stage 15 (at protein level). In stage 16 embryos, also detected in the exit glia with increasing expression in the somatic musculature (at protein level). Also detected in the visceral mesoderm but not in the midgut or central nervous system until the end of embryogenesis (at protein level). In third instar larvae, detectable at varying levels in all cell types (at protein level). Expressed in spermatocytes (at protein level).

The protein resides in the nucleus. Its subcellular location is the nucleus lamina. Lamins are components of the nuclear lamina, a fibrous layer on the nucleoplasmic side of the inner nuclear membrane, which is thought to provide a framework for the nuclear envelope and may also interact with chromatin. In spermatocytes, regulates cytokinesis during meiosis. In Drosophila melanogaster (Fruit fly), this protein is Lamin-C (LamC).